Reading from the N-terminus, the 446-residue chain is Signal recognition particle 54 kDa protein (446 aa).

GTP contacts are provided by residues 103–110 (GVQGTGKT), 185–189 (DTAGR), and 245–248 (TKMD).

The protein belongs to the GTP-binding SRP family. SRP54 subfamily. As to quaternary structure, part of the signal recognition particle protein translocation system, which is composed of SRP and FtsY. Archaeal SRP consists of a 7S RNA molecule of 300 nucleotides and two protein subunits: SRP54 and SRP19.

The protein resides in the cytoplasm. The catalysed reaction is GTP + H2O = GDP + phosphate + H(+). In terms of biological role, involved in targeting and insertion of nascent membrane proteins into the cytoplasmic membrane. Binds to the hydrophobic signal sequence of the ribosome-nascent chain (RNC) as it emerges from the ribosomes. The SRP-RNC complex is then targeted to the cytoplasmic membrane where it interacts with the SRP receptor FtsY. The chain is Signal recognition particle 54 kDa protein from Metallosphaera sedula (strain ATCC 51363 / DSM 5348 / JCM 9185 / NBRC 15509 / TH2).